Consider the following 255-residue polypeptide: uncharacterized protein (255 aa).

Residues 253–255 (SKI) carry the Microbody targeting signal motif.

The protein belongs to the enoyl-CoA hydratase/isomerase family.

The protein localises to the peroxisome. This is an uncharacterized protein from Caenorhabditis elegans.